The sequence spans 71 residues: Translational regulator CsrA (71 aa).

It belongs to the CsrA/RsmA family. Homodimer; the beta-strands of each monomer intercalate to form a hydrophobic core, while the alpha-helices form wings that extend away from the core.

The protein resides in the cytoplasm. A translational regulator that binds mRNA to regulate translation initiation and/or mRNA stability. Usually binds in the 5'-UTR at or near the Shine-Dalgarno sequence preventing ribosome-binding, thus repressing translation. Its main target seems to be the major flagellin gene, while its function is anatagonized by FliW. The protein is Translational regulator CsrA of Clostridium botulinum (strain Alaska E43 / Type E3).